Reading from the N-terminus, the 146-residue chain is Suppressor APC domain-containing protein 1 (146 aa).

A disordered region spans residues His-121–Val-146. A compositionally biased stretch (pro residues) spans Pro-137 to Val-146.

The sequence is that of Suppressor APC domain-containing protein 1 (Sapcd1) from Mus musculus (Mouse).